The following is a 363-amino-acid chain: NAD(P)H-quinone oxidoreductase subunit 1, chloroplastic (363 aa).

The next 6 membrane-spanning stretches (helical) occupy residues 30 to 50, 98 to 118, 129 to 149, 248 to 268, 300 to 320, and 343 to 363; these read LVPI…IVWL, FSIG…VIPF, IGIF…LMSG, YSGI…LLSS, IIGT…FLFI, and FLLP…LLSL.

Belongs to the complex I subunit 1 family. In terms of assembly, NDH is composed of at least 16 different subunits, 5 of which are encoded in the nucleus.

It localises to the plastid. The protein resides in the chloroplast thylakoid membrane. The enzyme catalyses a plastoquinone + NADH + (n+1) H(+)(in) = a plastoquinol + NAD(+) + n H(+)(out). It catalyses the reaction a plastoquinone + NADPH + (n+1) H(+)(in) = a plastoquinol + NADP(+) + n H(+)(out). NDH shuttles electrons from NAD(P)H:plastoquinone, via FMN and iron-sulfur (Fe-S) centers, to quinones in the photosynthetic chain and possibly in a chloroplast respiratory chain. The immediate electron acceptor for the enzyme in this species is believed to be plastoquinone. Couples the redox reaction to proton translocation, and thus conserves the redox energy in a proton gradient. This chain is NAD(P)H-quinone oxidoreductase subunit 1, chloroplastic, found in Gossypium hirsutum (Upland cotton).